We begin with the raw amino-acid sequence, 309 residues long: Ribosomal RNA small subunit methyltransferase H (309 aa).

Residues 33–35 (GGH), Asp53, Phe79, Asp100, and Gln107 each bind S-adenosyl-L-methionine.

Belongs to the methyltransferase superfamily. RsmH family.

The protein resides in the cytoplasm. It catalyses the reaction cytidine(1402) in 16S rRNA + S-adenosyl-L-methionine = N(4)-methylcytidine(1402) in 16S rRNA + S-adenosyl-L-homocysteine + H(+). Functionally, specifically methylates the N4 position of cytidine in position 1402 (C1402) of 16S rRNA. In Clostridium botulinum (strain ATCC 19397 / Type A), this protein is Ribosomal RNA small subunit methyltransferase H.